The sequence spans 252 residues: ATP synthase subunit a, chloroplastic (252 aa).

5 helical membrane passes run 41 to 61 (GQVL…TLLA), 100 to 120 (VPFL…GALL), 138 to 158 (DINT…YAGI), 204 to 224 (LIVG…LMLL), and 225 to 245 (GVFT…AYIG).

Belongs to the ATPase A chain family. As to quaternary structure, F-type ATPases have 2 components, CF(1) - the catalytic core - and CF(0) - the membrane proton channel. CF(1) has five subunits: alpha(3), beta(3), gamma(1), delta(1), epsilon(1). CF(0) has four main subunits: a, b, b' and c.

The protein localises to the plastid. It localises to the chloroplast thylakoid membrane. Key component of the proton channel; it plays a direct role in the translocation of protons across the membrane. The chain is ATP synthase subunit a, chloroplastic from Oedogonium cardiacum (Filamentous green alga).